Reading from the N-terminus, the 479-residue chain is Anaerobic nitric oxide reductase flavorubredoxin (479 aa).

The tract at residues 30–210 (LRGSSYNSYL…PFSRLVTPKI (181 aa)) is zinc metallo-hydrolase. Fe cation-binding residues include His-79, Glu-81, Asp-83, His-147, Asp-166, and His-227. One can recognise a Flavodoxin-like domain in the interval 254 to 393 (ITIFYDTMSN…LCREHGREIA (140 aa)). FMN contacts are provided by residues 260-264 (TMSNN) and 342-369 (AFGS…EMSL). Positions 423-474 (GPRMQCSVCQWIYDPAKGEPMQDVAPGTPWSEVPDNFLCPECSLGKDVFEEL) constitute a Rubredoxin-like domain. Residues Cys-428, Cys-431, Cys-461, and Cys-464 each coordinate Fe cation.

This sequence in the N-terminal section; belongs to the zinc metallo-hydrolase group 3 family. In terms of assembly, homotetramer. Requires Fe cation as cofactor. It depends on FMN as a cofactor.

The protein resides in the cytoplasm. The protein operates within nitrogen metabolism; nitric oxide reduction. Its function is as follows. Anaerobic nitric oxide reductase; uses NADH to detoxify nitric oxide (NO), protecting several 4Fe-4S NO-sensitive enzymes. Has at least 2 reductase partners, only one of which (NorW, flavorubredoxin reductase) has been identified. NO probably binds to the di-iron center; electrons enter from the NorW at rubredoxin and are transferred sequentially to the FMN center and the di-iron center. Also able to function as an aerobic oxygen reductase. This Shigella boydii serotype 4 (strain Sb227) protein is Anaerobic nitric oxide reductase flavorubredoxin.